The primary structure comprises 2021 residues: HEAT repeat-containing protein 5A (2021 aa).

HEAT repeat units follow at residues 795–836 (SQRP…HLAS) and 1059–1096 (VNLSSLVPTLCVHLYSPHLPLRRAVLACLRQLAQREAA). Disordered regions lie at residues 1503–1528 (EGNGHLSRPVTPTSMGQERGSQLPAD) and 1989–2012 (RGNQESLKPKAPSRGTMGGGHGSP). The span at 1512–1522 (VTPTSMGQERG) shows a compositional bias: polar residues.

The protein belongs to the HEATR5 family.

The protein is HEAT repeat-containing protein 5A (heatr5a) of Xenopus tropicalis (Western clawed frog).